The sequence spans 176 residues: 4-hydroxylaminobenzoate lyase (176 aa).

The protein belongs to the PnbB family.

It catalyses the reaction 4-hydroxylaminobenzoate + H2O + H(+) = 3,4-dihydroxybenzoate + NH4(+). Lyase involved in the degradation of nitroaromatic compounds. Catalyzes the conversion of 4-hydroxylaminobenzoate to 3,4-dihydroxybenzoate (protocatechuate). Required for the catabolism of 4-nitrotoluene. The protein is 4-hydroxylaminobenzoate lyase of Pseudomonas putida (Arthrobacter siderocapsulatus).